We begin with the raw amino-acid sequence, 156 residues long: 6,7-dimethyl-8-ribityllumazine synthase (156 aa).

5-amino-6-(D-ribitylamino)uracil-binding positions include Phe-22, Ala-57–Glu-59, and Thr-81–Ile-83. Residue Gly-86–Thr-87 coordinates (2S)-2-hydroxy-3-oxobutyl phosphate. Catalysis depends on His-89, which acts as the Proton donor. Phe-114 lines the 5-amino-6-(D-ribitylamino)uracil pocket. Arg-128 provides a ligand contact to (2S)-2-hydroxy-3-oxobutyl phosphate.

It belongs to the DMRL synthase family. In terms of assembly, forms an icosahedral capsid composed of 60 subunits, arranged as a dodecamer of pentamers.

The enzyme catalyses (2S)-2-hydroxy-3-oxobutyl phosphate + 5-amino-6-(D-ribitylamino)uracil = 6,7-dimethyl-8-(1-D-ribityl)lumazine + phosphate + 2 H2O + H(+). The protein operates within cofactor biosynthesis; riboflavin biosynthesis; riboflavin from 2-hydroxy-3-oxobutyl phosphate and 5-amino-6-(D-ribitylamino)uracil: step 1/2. Its function is as follows. Catalyzes the formation of 6,7-dimethyl-8-ribityllumazine by condensation of 5-amino-6-(D-ribitylamino)uracil with 3,4-dihydroxy-2-butanone 4-phosphate. This is the penultimate step in the biosynthesis of riboflavin. In Cronobacter sakazakii (strain ATCC BAA-894) (Enterobacter sakazakii), this protein is 6,7-dimethyl-8-ribityllumazine synthase.